The primary structure comprises 281 residues: MRPQIMPFYIEMGKGDGGITGEDILQNWMLKSNLKNVEILEELPLRPTKLVVAISEEIYPDVYTIEDFKEKVGDREVFIASEFPEIARKYAEKHGLNAIVFDPIGKTEAALLPPMPEADLIIEITEFGTTLKENMCRIIDLVMDKVHSVFIVNKESLKDEEKKQVMENLVTDLKEVIESRNLVSFYFNVPNEDDLRRIIDYLTENGFDPTISPLAKGGAAVHIIVDRSRVKFLKPIIRGMGAKRIATSPVITSGTNRAAQQKPFYLLSGIQREFPSASPFF.

It belongs to the ATP phosphoribosyltransferase family. Long subfamily. The cofactor is Mg(2+).

It localises to the cytoplasm. The enzyme catalyses 1-(5-phospho-beta-D-ribosyl)-ATP + diphosphate = 5-phospho-alpha-D-ribose 1-diphosphate + ATP. It participates in amino-acid biosynthesis; L-histidine biosynthesis; L-histidine from 5-phospho-alpha-D-ribose 1-diphosphate: step 1/9. With respect to regulation, feedback inhibited by histidine. In terms of biological role, catalyzes the condensation of ATP and 5-phosphoribose 1-diphosphate to form N'-(5'-phosphoribosyl)-ATP (PR-ATP). Has a crucial role in the pathway because the rate of histidine biosynthesis seems to be controlled primarily by regulation of HisG enzymatic activity. The protein is ATP phosphoribosyltransferase (hisG) of Archaeoglobus fulgidus (strain ATCC 49558 / DSM 4304 / JCM 9628 / NBRC 100126 / VC-16).